Consider the following 471-residue polypeptide: MNFGKVIQVIGPVVDIQFPPGQLPEIYNAIKIRSADQENYQGSFEIDITLEAAQHLGNNAVRCVAMSSTDGLMRGMKALDTGAPISVPVGAEILGRMFNVLGDPIDEAGQVAAKEVWPIHRKAPTFENLEPSTEVLETGIKVIDLLAPYAKGGKVGLFGGAGVGKTVLIQELINNIAMEYSGYSVFAGVGERTREGNDLYNEFKESGILKNVAMVFGQMNEPPGARMRVALSGLVMAEYFRDVQNQDVLLFIDNIFRFTQAGSEVSALLGRMPSAVGYQPTLSTEMGQLQERITSTKNGSITSVQAIYVPADDLTDPAPATAFAHLDATTVLSRAIAELGIYPAVDPLDSTSRILDPHVVGDEHYSVARGVQKILQRYKELQDIIAILGMDELSEDDKIVVARARKIQRFLSQPFHVAEAFTGTPGKFVPLKESIRGFKEILEGKHDDLPESAFYMVGTIEEAVAKAKEMA.

G159–T166 lines the ATP pocket.

Belongs to the ATPase alpha/beta chains family. In terms of assembly, F-type ATPases have 2 components, CF(1) - the catalytic core - and CF(0) - the membrane proton channel. CF(1) has five subunits: alpha(3), beta(3), gamma(1), delta(1), epsilon(1). CF(0) has four main subunits: a(1), b(1), b'(1) and c(9-12).

The protein resides in the cell membrane. The enzyme catalyses ATP + H2O + 4 H(+)(in) = ADP + phosphate + 5 H(+)(out). In terms of biological role, produces ATP from ADP in the presence of a proton gradient across the membrane. The catalytic sites are hosted primarily by the beta subunits. This Heliobacterium modesticaldum (strain ATCC 51547 / Ice1) protein is ATP synthase subunit beta.